The following is a 295-amino-acid chain: Cell shape-determining protein MreC (295 aa).

Positions 1–34 (MPQFFLNKRLIILLISIIVLVALVGFSLRDRENA) are cleaved as a signal peptide. A coiled-coil region spans residues 66–112 (VVDLKNTYTENQHLKERLEELAQLESEVADLKKENKDLKESLDITDS). The tract at residues 276–295 (SAEAGTTDDDTTSSDTTGGQ) is disordered.

This sequence belongs to the MreC family. Homooligomer of 24 subunits, arranged as 12 dimers.

In terms of biological role, involved in formation and maintenance of cell shape. The sequence is that of Cell shape-determining protein MreC from Listeria monocytogenes serovar 1/2a (strain ATCC BAA-679 / EGD-e).